A 1234-amino-acid polypeptide reads, in one-letter code: Stress response protein NST1 (1234 aa).

Composition is skewed to polar residues over residues 1–10 (MSDTTDSTSR) and 21–31 (YDNQSQPTTSE). Disordered stretches follow at residues 1-70 (MSDT…TSRV), 149-175 (KANN…AANA), 246-283 (QQRM…VNSR), 513-608 (TARE…EEEK), 661-816 (KKLK…ESQN), 924-945 (PNGL…RLNS), and 1214-1234 (GNNS…GLWN). The span at 39–51 (NKKKKKKANKKHK) shows a compositional bias: basic residues. Over residues 161–175 (NGTSSASGANSAANA) the composition is skewed to low complexity. Composition is skewed to basic and acidic residues over residues 263-273 (ENPEVHGEHPH) and 513-527 (TARE…KKDA). Acidic residues-rich tracts occupy residues 555–587 (EYYE…DDLV) and 596–605 (ASDTESEISE). A coiled-coil region spans residues 633–826 (KEKLSEDRTQ…QLELESAQLP (194 aa)). Basic and acidic residues-rich tracts occupy residues 661–670 (KKLKQKEKAK) and 679–806 (AKEE…KEQQ). 2 stretches are compositionally biased toward low complexity: residues 929 to 941 (SSTS…SSKS) and 1214 to 1227 (GNNS…SSNG).

The protein belongs to the NST1 family.

The protein resides in the cytoplasm. Its function is as follows. May act as a negative regulator of salt tolerance. This chain is Stress response protein NST1 (NST1), found in Scheffersomyces stipitis (strain ATCC 58785 / CBS 6054 / NBRC 10063 / NRRL Y-11545) (Yeast).